The following is a 229-amino-acid chain: MAKISKKLFAAYEGIDKQKAYPLFDAIKLAQEKSITKFDGSINIAIKLNLDTTKVEQQLRGSISLPNGNGKNVRVLVLSEDITKEEAASVGADYFGGADYIQNIEKMLNQIDVIITNQKMMPLLAKLGKVLGPRGLMPNPKIGTVTNDVLKAVEEFKRGRIEYRTDTYGNIHMSIGRVSFETTKIEENANALLNLIKSKKPATVKGQYIQNIAVSPTMGPGIKVVINNN.

The protein belongs to the universal ribosomal protein uL1 family. In terms of assembly, part of the 50S ribosomal subunit.

Functionally, binds directly to 23S rRNA. The L1 stalk is quite mobile in the ribosome, and is involved in E site tRNA release. Protein L1 is also a translational repressor protein, it controls the translation of the L11 operon by binding to its mRNA. The chain is Large ribosomal subunit protein uL1 from Ureaplasma parvum serovar 3 (strain ATCC 27815 / 27 / NCTC 11736).